The following is a 306-amino-acid chain: UDP-3-O-acyl-N-acetylglucosamine deacetylase (306 aa).

Zn(2+) is bound by residues His78, His237, and Asp241. Catalysis depends on His264, which acts as the Proton donor.

This sequence belongs to the LpxC family. It depends on Zn(2+) as a cofactor.

The enzyme catalyses a UDP-3-O-[(3R)-3-hydroxyacyl]-N-acetyl-alpha-D-glucosamine + H2O = a UDP-3-O-[(3R)-3-hydroxyacyl]-alpha-D-glucosamine + acetate. The protein operates within glycolipid biosynthesis; lipid IV(A) biosynthesis; lipid IV(A) from (3R)-3-hydroxytetradecanoyl-[acyl-carrier-protein] and UDP-N-acetyl-alpha-D-glucosamine: step 2/6. Its function is as follows. Catalyzes the hydrolysis of UDP-3-O-myristoyl-N-acetylglucosamine to form UDP-3-O-myristoylglucosamine and acetate, the committed step in lipid A biosynthesis. The sequence is that of UDP-3-O-acyl-N-acetylglucosamine deacetylase from Aromatoleum aromaticum (strain DSM 19018 / LMG 30748 / EbN1) (Azoarcus sp. (strain EbN1)).